Reading from the N-terminus, the 57-residue chain is Defensin-like protein 302 (57 aa).

Intrachain disulfides connect Cys19–Cys39, Cys26–Cys44, and Cys32–Cys46.

Belongs to the DEFL family.

This Arabidopsis thaliana (Mouse-ear cress) protein is Defensin-like protein 302.